We begin with the raw amino-acid sequence, 695 residues long: MSNFDDLQILDQLQTSARFRGDTRIRRFKGSNNSKSPFGLNPSSRISQWPRITFIRAKDNYNPAEELCQLIDEQNAHNEAKHQSKEIMLPKETNVKSCEDLSKTGEIKALDIVLFKAITSKGDTLKVKKIPEYAEAFDTTKNVEVSSFPEKSMNENVLIQHSLNLAPSDKEISSTEESEQLCYKEQESEKELYSKDNDDSLDILNVPNLVNDDIANNNAAPPPPLAQAQEQLSTENEDEFDIDDTTDKMTTFTMNKFADLSVLEEDDDDEDEDEELEGEKEEEEEEKEKPEISNYDETEGKVNFSLEDSESLEFDEGSDDYDYAKLTTELVGNTDSLAEDEDDILEEDEDEDEEELLAIFDASDDSEIEAYLSIGDTLQNDFTIYDYDSEDEEYNNPSTQKTEKVSQSKKGAKVKEEKGLKKDRKLPKKMRKAQKKLERKAGKAVAARMGDAFSNSLDDESMNLYAELQEQWLKDKSKKARRRAEREKLRSEGLLGKKSKKKLLRESQKPSSSDSDNASLTRIDKIFINDVYQRMQQFKHSAIEEISLPPCRKYVRRLVHALANDLNLKSRSYGSGNKRYTMLSKTHKFDASSVDLVSLTRIMERLQTRVEYQSFSKSGRKSRMTVSSVRSSKATRVYDGQIVGEDAPEISKENPGRRLLEKLGWYAGKGLGHPENEGSKDSLRAIVKVSRSGLG.

Disordered stretches follow at residues 168–200, 213–242, 257–317, 332–351, 388–448, and 475–517; these read SDKE…NDDS, DIAN…EFDI, FADL…FDEG, GNTD…DEDE, DSED…VAAR, and DKSK…DSDN. Positions 182-198 are enriched in basic and acidic residues; sequence CYKEQESEKELYSKDND. Acidic residues-rich tracts occupy residues 262–286, 307–317, and 337–351; these read VLEE…EEEE, EDSESLEFDEG, and LAED…DEDE. Over residues 421–434 the composition is skewed to basic residues; the sequence is KKDRKLPKKMRKAQ. The region spanning 525–587 is the R3H domain; it reads KIFINDVYQR…KRYTMLSKTH (63 aa). Residues 652–695 enclose the G-patch domain; that stretch reads KENPGRRLLEKLGWYAGKGLGHPENEGSKDSLRAIVKVSRSGLG.

Its subcellular location is the cytoplasm. The chain is G-patch and R3H domain-containing protein C30B4.02c from Schizosaccharomyces pombe (strain 972 / ATCC 24843) (Fission yeast).